Reading from the N-terminus, the 351-residue chain is Porphobilinogen deaminase (351 aa).

Cys-242 carries the S-(dipyrrolylmethanemethyl)cysteine modification.

Belongs to the HMBS family. As to quaternary structure, monomer. It depends on dipyrromethane as a cofactor.

The catalysed reaction is 4 porphobilinogen + H2O = hydroxymethylbilane + 4 NH4(+). It participates in porphyrin-containing compound metabolism; protoporphyrin-IX biosynthesis; coproporphyrinogen-III from 5-aminolevulinate: step 2/4. Functionally, tetrapolymerization of the monopyrrole PBG into the hydroxymethylbilane pre-uroporphyrinogen in several discrete steps. This Rickettsia peacockii (strain Rustic) protein is Porphobilinogen deaminase.